A 481-amino-acid chain; its full sequence is Rhamnogalacturonan I rhamnosyltransferase 4 (481 aa).

A helical; Signal-anchor for type II membrane protein transmembrane segment spans residues 33 to 55; sequence VWFFRVCSCILVWTCLIQLFWHS. Asn85 and Asn118 each carry an N-linked (GlcNAc...) asparagine glycan. 258 to 260 provides a ligand contact to substrate; the sequence is HLR. N-linked (GlcNAc...) asparagine glycans are attached at residues Asn372 and Asn432.

Belongs to the glycosyltransferase GT106 family.

It localises to the golgi apparatus membrane. The catalysed reaction is alpha-D-galacturonosyl-[(1-&gt;2)-alpha-L-rhamnosyl-(1-&gt;4)-alpha-D-galacturonosyl](n) + UDP-beta-L-rhamnose = [(1-&gt;2)-alpha-L-rhamnosyl-(1-&gt;4)-alpha-D-galacturonosyl](n+1) + UDP + H(+). It participates in glycan metabolism; pectin biosynthesis. Its function is as follows. Glycosyltransferase involved in the formation of rhamnogalacturonan I (RG-I) oligosaccharides in the seed coat mucilage, which is a specialized cell wall with abundant RG-I. Transfers the rhamnose residue from UDP-beta-L-rhamnose to RG-I oligosaccharides. The protein is Rhamnogalacturonan I rhamnosyltransferase 4 of Arabidopsis thaliana (Mouse-ear cress).